Here is a 523-residue protein sequence, read N- to C-terminus: Katanin p60 ATPase-containing subunit A1 (523 aa).

The disordered stretch occupies residues 82 to 215; sequence KEAPTGRRAA…DGKSKRGLYE (134 aa). The segment covering 178–194 has biased composition (low complexity); the sequence is AGARSSTAGKKGAASKS. 279–286 lines the ATP pocket; the sequence is GPPGTGKT.

The protein belongs to the AAA ATPase family. Katanin p60 subunit A1 subfamily. In terms of assembly, may homooligomerize. Component of KTN80-KTN1 complexes composed of a hexamer of KTN1-KTN80 heterodimers that sense microtubule (MT) geometry to confer precise MT severing. Interacts directly with KTN80.1, KTN80.2, KTN80.3 and KTN80.4. Can interact with KTN80.1. May interact with the kinesin related protein KIN14A. Interacts with microtubule polymers. Binds to IPGA1. As to expression, expressed ubiquitously, including siliques, flowers, leaves, stems and roots.

Its subcellular location is the cytoplasm. The protein resides in the cytoskeleton. The catalysed reaction is n ATP + n H2O + a microtubule = n ADP + n phosphate + (n+1) alpha/beta tubulin heterodimers.. Severs microtubules in vitro in an ATP-dependent manner. Required for oligomerization of functional KTN80-KTN1 complexes that catalyze microtubule severing. This activity may promote rapid reorganization of cellular microtubule arrays. May be required for reorientation of cortical microtubule arrays during cellular elongation. Failure to correctly orient these arrays drastically compromises fiber length, cell wall thickness and mechanical strength. May also be required for the spatial organization of developmental cues within the root. Involved in the IPGA1- and AN-dependent regulation of pavement cells morphogenesis leading to puzzle shape. This chain is Katanin p60 ATPase-containing subunit A1, found in Arabidopsis thaliana (Mouse-ear cress).